A 750-amino-acid chain; its full sequence is Cellulose synthase-like protein H1 (750 aa).

A run of 2 helical transmembrane segments spans residues 27–47 (LAILFLLLALLLHRVLHDSGA) and 52–72 (AALACEAWFTFMWLLNVNAKW). Catalysis depends on residues D137 and D459. The next 6 helical transmembrane spans lie at 537–557 (VWPVRAPFELCYALLGPYCLL), 570–590 (GFYIALALFIAYNTYMFMEFI), 608–628 (ITSASAWLLAFLTVILKTLGF), 664–684 (VFIPVTALAMLSVIAIAVGAW), 697–717 (GPGISEFISCGWLVLCFMPLL), and 727–747 (GIPWSIKMKACLLVAIFLLFC).

The protein belongs to the glycosyltransferase 2 family. Plant cellulose synthase-like H subfamily.

The protein resides in the golgi apparatus membrane. Its function is as follows. Thought to be a Golgi-localized beta-glycan synthase that polymerize the backbones of noncellulosic polysaccharides (hemicelluloses) of plant cell wall. The polypeptide is Cellulose synthase-like protein H1 (CSLH1) (Oryza sativa subsp. japonica (Rice)).